The chain runs to 349 residues: Protein-glutamate methylesterase/protein-glutamine glutaminase (349 aa).

Residues 5–122 (RVLSVDDSAL…REGMLAYNEM (118 aa)) enclose the Response regulatory domain. Residue Asp56 is modified to 4-aspartylphosphate. The CheB-type methylesterase domain occupies 152–344 (LLSSEKLIAI…QQMLAKISAG (193 aa)). Active-site residues include Ser164, His190, and Asp286.

This sequence belongs to the CheB family. Interacts with CheA. Binds to a C-terminal pentapeptide sequence carried by certain receptors. In terms of processing, phosphorylated by CheA. Phosphorylation of the N-terminal regulatory domain activates the methylesterase activity.

Its subcellular location is the cytoplasm. The catalysed reaction is [protein]-L-glutamate 5-O-methyl ester + H2O = L-glutamyl-[protein] + methanol + H(+). The enzyme catalyses L-glutaminyl-[protein] + H2O = L-glutamyl-[protein] + NH4(+). With respect to regulation, methylesterase activity is activated via phosphorylation in response to negative chemotactic stimuli and is inhibited in the presence of attractants. Activation requires both CheA and CheW. Functionally, involved in chemotaxis. Part of a chemotaxis signal transduction system that modulates chemotaxis in response to various stimuli. Catalyzes the demethylation of specific methylglutamate residues introduced into the chemoreceptors (methyl-accepting chemotaxis proteins or MCP) by CheR. Also mediates the irreversible deamidation of specific glutamine residues to glutamic acid. Catalyzes its own deactivation by removing the activating phosphoryl group. The protein is Protein-glutamate methylesterase/protein-glutamine glutaminase of Escherichia coli (strain K12).